Reading from the N-terminus, the 282-residue chain is NADPH-dependent 7-cyano-7-deazaguanine reductase (282 aa).

Substrate is bound at residue 88 to 90 (IES). 90–91 (SK) contacts NADPH. Cysteine 190 functions as the Thioimide intermediate in the catalytic mechanism. Aspartate 197 functions as the Proton donor in the catalytic mechanism. Position 229–230 (229–230 (HE)) interacts with substrate. 258–259 (RG) is a binding site for NADPH.

This sequence belongs to the GTP cyclohydrolase I family. QueF type 2 subfamily. Homodimer.

It is found in the cytoplasm. The catalysed reaction is 7-aminomethyl-7-carbaguanine + 2 NADP(+) = 7-cyano-7-deazaguanine + 2 NADPH + 3 H(+). It participates in tRNA modification; tRNA-queuosine biosynthesis. Its function is as follows. Catalyzes the NADPH-dependent reduction of 7-cyano-7-deazaguanine (preQ0) to 7-aminomethyl-7-deazaguanine (preQ1). In Pectobacterium carotovorum subsp. carotovorum (strain PC1), this protein is NADPH-dependent 7-cyano-7-deazaguanine reductase.